The following is a 291-amino-acid chain: Proline iminopeptidase (291 aa).

Residues 30–274 form the AB hydrolase-1 domain; sequence LLIHGGPGSS…ANSRHLALLD (245 aa). The active-site Nucleophile is the serine 103. Aspartate 242 is an active-site residue. Catalysis depends on histidine 269, which acts as the Proton donor.

Belongs to the peptidase S33 family.

The protein resides in the cell envelope. The catalysed reaction is Release of N-terminal proline from a peptide.. Its function is as follows. Releases the N-terminal proline from various substrates. This Lacticaseibacillus rhamnosus (strain Lc 705) (Lactobacillus rhamnosus) protein is Proline iminopeptidase.